A 225-amino-acid chain; its full sequence is MQRKIKSYVLRAGRISNRQQQGLDLWLEDYELKFDSPSPWNFAKEFGRHDADTIVEIGFGMGTSLFAMAMNNPQCNYLGIEVHKAGVGSLVADLHEYQISNVRVVAHDAVEVLQTKIPENSLAGVQIFFPDPWHKKRHHKRRLIQSEFIQMLVKKIRPSGFIHCATDWEDYAEHILNVLSSESALFNQQKEGGYSPRPDSRPLTKFELRGERLGHGVWDLVFIKK.

S-adenosyl-L-methionine is bound by residues Glu56, Glu81, Asp108, and Asp131. Residue Asp131 is part of the active site. Residues Lys135, Asp167, and Thr204–Glu207 each bind substrate.

The protein belongs to the class I-like SAM-binding methyltransferase superfamily. TrmB family.

It catalyses the reaction guanosine(46) in tRNA + S-adenosyl-L-methionine = N(7)-methylguanosine(46) in tRNA + S-adenosyl-L-homocysteine. It participates in tRNA modification; N(7)-methylguanine-tRNA biosynthesis. In terms of biological role, catalyzes the formation of N(7)-methylguanine at position 46 (m7G46) in tRNA. The polypeptide is tRNA (guanine-N(7)-)-methyltransferase (Legionella pneumophila (strain Lens)).